Consider the following 92-residue polypeptide: Small ribosomal subunit protein uS19c (92 aa).

This sequence belongs to the universal ribosomal protein uS19 family.

The protein resides in the plastid. It localises to the chloroplast. Protein S19 forms a complex with S13 that binds strongly to the 16S ribosomal RNA. The sequence is that of Small ribosomal subunit protein uS19c (rps19) from Trieres chinensis (Marine centric diatom).